An 83-amino-acid polypeptide reads, in one-letter code: Large ribosomal subunit protein eL31 (83 aa).

It belongs to the eukaryotic ribosomal protein eL31 family.

The sequence is that of Large ribosomal subunit protein eL31 from Methanococcus maripaludis (strain DSM 14266 / JCM 13030 / NBRC 101832 / S2 / LL).